Consider the following 395-residue polypeptide: uncharacterized protein (395 aa).

8 helical membrane-spanning segments follow: residues 15–35 (ILAF…VTVF), 56–76 (WPWI…NIII), 86–106 (FHAP…FQIV), 131–151 (AVLL…LITW), 175–195 (WFSF…IFIA), 254–274 (LANI…FAIV), 298–318 (IAIT…TQFV), and 348–368 (VYIP…QVVI).

The protein resides in the cell membrane. This is an uncharacterized protein from Mycoplasma pneumoniae (strain ATCC 29342 / M129 / Subtype 1) (Mycoplasmoides pneumoniae).